The following is a 185-amino-acid chain: Transcription antitermination protein NusB (185 aa).

It belongs to the NusB family.

In terms of biological role, involved in transcription antitermination. Required for transcription of ribosomal RNA (rRNA) genes. Binds specifically to the boxA antiterminator sequence of the ribosomal RNA (rrn) operons. The sequence is that of Transcription antitermination protein NusB from Rhodospirillum rubrum (strain ATCC 11170 / ATH 1.1.1 / DSM 467 / LMG 4362 / NCIMB 8255 / S1).